The primary structure comprises 396 residues: Elongation factor Tu (396 aa).

One can recognise a tr-type G domain in the interval 10–206; sequence KPHVNIGTIG…AVDAYIPEPE (197 aa). Positions 19–26 are G1; that stretch reads GHVDHGKT. Residue 19-26 participates in GTP binding; that stretch reads GHVDHGKT. Mg(2+) is bound at residue Thr26. The interval 60–64 is G2; that stretch reads GITIA. The interval 81–84 is G3; it reads DCPG. GTP-binding positions include 81–85 and 136–139; these read DCPGH and NKAD. The G4 stretch occupies residues 136-139; it reads NKAD. The interval 174–176 is G5; the sequence is SAL.

The protein belongs to the TRAFAC class translation factor GTPase superfamily. Classic translation factor GTPase family. EF-Tu/EF-1A subfamily. As to quaternary structure, monomer.

The protein resides in the cytoplasm. The catalysed reaction is GTP + H2O = GDP + phosphate + H(+). Its function is as follows. GTP hydrolase that promotes the GTP-dependent binding of aminoacyl-tRNA to the A-site of ribosomes during protein biosynthesis. In Geobacter metallireducens (strain ATCC 53774 / DSM 7210 / GS-15), this protein is Elongation factor Tu.